Reading from the N-terminus, the 466-residue chain is Delta-1 crystallin (466 aa).

Ala-2 carries the post-translational modification Blocked amino end (Ala).

This sequence belongs to the lyase 1 family. Argininosuccinate lyase subfamily. As to quaternary structure, homotetramer. The N-terminus is blocked. In terms of tissue distribution, eye lens.

Its function is as follows. Delta crystallin, the principal crystallin in embryonic lens, is found only in birds and reptiles. The chain is Delta-1 crystallin (ASL1) from Gallus gallus (Chicken).